Reading from the N-terminus, the 120-residue chain is Large ribosomal subunit protein uL18 (120 aa).

Positions 1–22 (MKVDRKTATHRRHQRIRRKIAG) are disordered. The span at 8 to 20 (ATHRRHQRIRRKI) shows a compositional bias: basic residues.

Belongs to the universal ribosomal protein uL18 family. As to quaternary structure, part of the 50S ribosomal subunit; part of the 5S rRNA/L5/L18/L25 subcomplex. Contacts the 5S and 23S rRNAs.

Its function is as follows. This is one of the proteins that bind and probably mediate the attachment of the 5S RNA into the large ribosomal subunit, where it forms part of the central protuberance. This is Large ribosomal subunit protein uL18 from Gloeobacter violaceus (strain ATCC 29082 / PCC 7421).